A 510-amino-acid polypeptide reads, in one-letter code: 2,3-bisphosphoglycerate-independent phosphoglycerate mutase (510 aa).

Mn(2+)-binding residues include Asp12 and Ser62. The active-site Phosphoserine intermediate is the Ser62. Substrate is bound by residues His123, 153–154 (RD), Arg185, Arg191, 261–264 (RPDR), and Lys336. Mn(2+) is bound by residues Asp403, His407, Asp444, His445, and His462.

Belongs to the BPG-independent phosphoglycerate mutase family. As to quaternary structure, monomer. Mn(2+) is required as a cofactor.

The catalysed reaction is (2R)-2-phosphoglycerate = (2R)-3-phosphoglycerate. The protein operates within carbohydrate degradation; glycolysis; pyruvate from D-glyceraldehyde 3-phosphate: step 3/5. In terms of biological role, essential for rapid growth and for sporulation. Catalyzes the interconversion of 2-phosphoglycerate and 3-phosphoglycerate. The polypeptide is 2,3-bisphosphoglycerate-independent phosphoglycerate mutase (Priestia megaterium (strain DSM 319 / IMG 1521) (Bacillus megaterium)).